Reading from the N-terminus, the 498-residue chain is Hyaluronan-mediated motility receptor (498 aa).

The segment at 150 to 331 (EEMTSERNVF…ITDLQNQLRQ (182 aa)) is required for interaction with FAM83D. N-linked (GlcNAc...) asparagine glycans are attached at residues Asn-262 and Asn-302. Hyaluronic acid-binding stretches follow at residues 420 to 430 (KQKIKHVVKLK) and 442 to 451 (KLRSQLAKRK). Asn-483 carries an N-linked (GlcNAc...) asparagine glycan. Thr-488 bears the Phosphothreonine mark.

Interacts with ANKRD26. Interacts with DYNLL1. Interacts with FAM83D/CHICA.

The protein localises to the cell surface. It localises to the cytoplasm. The protein resides in the cytoskeleton. It is found in the spindle. Receptor for hyaluronic acid (HA). Involved in cell motility. When hyaluronan binds to HMMR, the phosphorylation of a number of proteins, including the PTK2/FAK1 occurs. May also be involved in cellular transformation and metastasis formation, and in regulating extracellular-regulated kinase (ERK) activity. May act as a regulator of adipogenisis. The sequence is that of Hyaluronan-mediated motility receptor (Hmmr) from Rattus norvegicus (Rat).